We begin with the raw amino-acid sequence, 94 residues long: Protein LURE 1.1 (94 aa).

The signal sequence occupies residues 1–19 (MKLIFIFLTLLIFVSSCTS). Intrachain disulfides connect Cys-58–Cys-75, Cys-61–Cys-82, and Cys-65–Cys-84. The segment at 67–87 (RRDRYIRTCSFERKLCRCSYS) is PRK6 binding.

This sequence belongs to the DEFL family. In terms of assembly, binds to PRK6 LRRs. Expressed in the pistil. Detected exclusively in the synergid cells.

The protein localises to the secreted. Functionally, pollen tube attractants guiding pollen tubes to the ovular micropyle. The chain is Protein LURE 1.1 from Arabidopsis thaliana (Mouse-ear cress).